The primary structure comprises 694 residues: Polyphosphate kinase (694 aa).

N45 serves as a coordination point for ATP. 2 residues coordinate Mg(2+): R367 and R397. H427 acts as the Phosphohistidine intermediate in catalysis. ATP is bound by residues Y460, R553, and H580.

This sequence belongs to the polyphosphate kinase 1 (PPK1) family. It depends on Mg(2+) as a cofactor. Post-translationally, an intermediate of this reaction is the autophosphorylated ppk in which a phosphate is covalently linked to a histidine residue through a N-P bond.

The catalysed reaction is [phosphate](n) + ATP = [phosphate](n+1) + ADP. Its function is as follows. Catalyzes the reversible transfer of the terminal phosphate of ATP to form a long-chain polyphosphate (polyP). The protein is Polyphosphate kinase of Campylobacter coli.